A 285-amino-acid chain; its full sequence is 1-deoxypentalenic acid 11-beta-hydroxylase (285 aa).

Arg117 provides a ligand contact to substrate. 2 residues coordinate Fe cation: His137 and Asp139. Residues 137–139 (HQD) and Trp153 contribute to the 2-oxoglutarate site. Arg188 serves as a coordination point for substrate. His226 contributes to the Fe cation binding site. The 2-oxoglutarate site is built by Ser228 and Arg240.

This sequence belongs to the PhyH family. It depends on Fe cation as a cofactor. L-ascorbate is required as a cofactor.

It catalyses the reaction 1-deoxypentalenate + 2-oxoglutarate + O2 = 1-deoxy-11beta-hydroxypentalenate + succinate + CO2. It participates in antibiotic biosynthesis; neopentalenolactone biosynthesis. Catalyzes the conversion of 1-deoxypentalenic acid to 11-beta-hydroxy-1-deoxypentalenic acid in the biosynthesis of neopentalenolactone antibiotic. The polypeptide is 1-deoxypentalenic acid 11-beta-hydroxylase (ptlH) (Streptomyces avermitilis (strain ATCC 31267 / DSM 46492 / JCM 5070 / NBRC 14893 / NCIMB 12804 / NRRL 8165 / MA-4680)).